We begin with the raw amino-acid sequence, 135 residues long: Nitrogen fixation protein NifU 1 (135 aa).

Residues 1 to 10 (MRDMQDDDTK) show a composition bias toward basic and acidic residues. Residues 1–29 (MRDMQDDDTKSPAPPPAAAAAARRAAGQA) form a disordered region. Low complexity predominate over residues 18 to 29 (AAAAARRAAGQA).

It belongs to the NifU family.

In terms of biological role, may be involved in the formation or repair of [Fe-S] clusters present in iron-sulfur proteins. The protein is Nitrogen fixation protein NifU 1 (nifU1) of Rhodobacter capsulatus (Rhodopseudomonas capsulata).